We begin with the raw amino-acid sequence, 307 residues long: Thioredoxin reductase (307 aa).

34–41 (ESKAHGGQ) contacts FAD. A disulfide bridge connects residues Cys134 and Cys137. FAD is bound at residue 275–284 (DVRAKSFRQV).

The protein belongs to the class-II pyridine nucleotide-disulfide oxidoreductase family. As to quaternary structure, homodimer. It depends on FAD as a cofactor.

Its subcellular location is the cytoplasm. The catalysed reaction is [thioredoxin]-dithiol + NADP(+) = [thioredoxin]-disulfide + NADPH + H(+). In Treponema pallidum (strain Nichols), this protein is Thioredoxin reductase (trxB).